The chain runs to 143 residues: Hemoglobin subunit alpha (143 aa).

Ser2 carries the N-acetylserine modification. A Globin domain is found at 2 to 143 (SLSDKDKAAV…VALALAEKYR (142 aa)). Residue His60 participates in O2 binding. Residue His89 coordinates heme b.

It belongs to the globin family. As to quaternary structure, heterotetramer of two alpha chains and two beta chains. In terms of tissue distribution, red blood cells.

Involved in oxygen transport from the lung to the various peripheral tissues. The protein is Hemoglobin subunit alpha (hba) of Artedidraco orianae (Barbeled plunderfish).